Consider the following 167-residue polypeptide: Translationally-controlled tumor protein homolog (167 aa).

The region spanning 1 to 167 (MLVYQDLLSG…FSHGLKEIKC (167 aa)) is the TCTP domain.

It belongs to the TCTP family.

It is found in the cytoplasm. Involved in calcium binding and microtubule stabilization. This chain is Translationally-controlled tumor protein homolog (TCTP), found in Zea mays (Maize).